The following is a 58-amino-acid chain: MSEVRVKENESLDSALKRFKRQCAKAGVLAEVRKREHYESPSVRRKKKSEAARKRRYK.

A disordered region spans residues 35-58 (REHYESPSVRRKKKSEAARKRRYK). Residues 43 to 58 (VRRKKKSEAARKRRYK) show a composition bias toward basic residues.

The protein belongs to the bacterial ribosomal protein bS21 family.

The sequence is that of Small ribosomal subunit protein bS21 from Acetivibrio thermocellus (strain ATCC 27405 / DSM 1237 / JCM 9322 / NBRC 103400 / NCIMB 10682 / NRRL B-4536 / VPI 7372) (Clostridium thermocellum).